The chain runs to 359 residues: Peptide chain release factor 1 (359 aa).

Gln-236 is subject to N5-methylglutamine.

It belongs to the prokaryotic/mitochondrial release factor family. Methylated by PrmC. Methylation increases the termination efficiency of RF1.

It is found in the cytoplasm. In terms of biological role, peptide chain release factor 1 directs the termination of translation in response to the peptide chain termination codons UAG and UAA. The sequence is that of Peptide chain release factor 1 from Ureaplasma parvum serovar 3 (strain ATCC 27815 / 27 / NCTC 11736).